The chain runs to 243 residues: Small ribosomal subunit protein uS3 (243 aa).

The KH type-2 domain occupies 39–107 (MRKFVMSELK…ETHLNIVEVR (69 aa)). The interval 214-243 (ASERRAMEGDAQGPASRDRDRDRDRRRDNA) is disordered. Basic and acidic residues predominate over residues 229–243 (SRDRDRDRDRRRDNA).

It belongs to the universal ribosomal protein uS3 family. Part of the 30S ribosomal subunit. Forms a tight complex with proteins S10 and S14.

Functionally, binds the lower part of the 30S subunit head. Binds mRNA in the 70S ribosome, positioning it for translation. This chain is Small ribosomal subunit protein uS3, found in Rhizobium leguminosarum bv. trifolii (strain WSM2304).